Here is a 416-residue protein sequence, read N- to C-terminus: UBX domain-containing protein 4 (416 aa).

The UBX domain occupies 273–350 (KAISECLLRV…EFGSKTMLLF (78 aa)). A disordered region spans residues 376–402 (TRTTPSVNTINKSNPQGPSDNATSIKK). Positions 378-402 (TTPSVNTINKSNPQGPSDNATSIKK) are enriched in polar residues.

The protein localises to the nucleus. Its subcellular location is the cytoplasm. Involved in CDC48-dependent protein degradation through the ubiquitin/proteasome pathway. This chain is UBX domain-containing protein 4 (UBX4), found in Saccharomyces cerevisiae (strain ATCC 204508 / S288c) (Baker's yeast).